We begin with the raw amino-acid sequence, 334 residues long: DNA polymerase beta (334 aa).

K(+) is bound by residues Lys-60, Leu-62, and Val-65. 3 residues coordinate Na(+): Lys-60, Leu-62, and Val-65. The Nucleophile; Schiff-base intermediate with DNA; for 5'-dRP lyase activity role is filled by Lys-72. Arg-83 carries the post-translational modification Omega-N-methylarginine; by PRMT6. Residues Thr-101, Val-103, and Ile-106 each contribute to the K(+) site. Na(+) contacts are provided by Thr-101, Val-103, and Ile-106. Arg-149 is an a 2'-deoxyribonucleoside 5'-triphosphate binding site. Arg-152 carries the omega-N-methylarginine; by PRMT6 modification. Positions 180, 183, 189, and 190 each coordinate a 2'-deoxyribonucleoside 5'-triphosphate. The tract at residues 183-192 (RGAESSGDMD) is DNA-binding. Mg(2+)-binding residues include Asp-190, Asp-192, and Asp-255.

Belongs to the DNA polymerase type-X family. As to quaternary structure, monomer. The cofactor is Mg(2+). Post-translationally, methylation by PRMT6 stimulates the polymerase activity by enhancing DNA binding and processivity. Ubiquitinated: monoubiquitinated by huwe1/arf-bp1. Monoubiquitinated protein is then the target of stub1/chip, which catalyzes polyubiquitination from monoubiquitin, leading to degradation by the proteasome. usp47 mediates the deubiquitination of monoubiquitinated protein, preventing polyubiquitination by STUB1/CHIP and its subsequent degradation.

It localises to the nucleus. The protein resides in the cytoplasm. It catalyses the reaction DNA(n) + a 2'-deoxyribonucleoside 5'-triphosphate = DNA(n+1) + diphosphate. It carries out the reaction a 5'-end 2'-deoxyribose-2'-deoxyribonucleotide-DNA = (2E,4S)-4-hydroxypenten-2-al-5-phosphate + a 5'-end 5'-phospho-2'-deoxyribonucleoside-DNA + H(+). The catalysed reaction is 2'-deoxyribonucleotide-(2'-deoxyribose 5'-phosphate)-2'-deoxyribonucleotide-DNA = a 3'-end 2'-deoxyribonucleotide-(2,3-dehydro-2,3-deoxyribose 5'-phosphate)-DNA + a 5'-end 5'-phospho-2'-deoxyribonucleoside-DNA + H(+). Functionally, repair polymerase that plays a key role in base-excision repair. During this process, the damaged base is excised by specific DNA glycosylases, the DNA backbone is nicked at the abasic site by an apurinic/apyrimidic (AP) endonuclease, and POLB removes 5'-deoxyribose-phosphate from the preincised AP site acting as a 5'-deoxyribose-phosphate lyase (5'-dRP lyase); through its DNA polymerase activity, it adds one nucleotide to the 3' end of the arising single-nucleotide gap. Conducts 'gap-filling' DNA synthesis in a stepwise distributive fashion rather than in a processive fashion as for other DNA polymerases. It is also able to cleave sugar-phosphate bonds 3' to an intact AP site, acting as an AP lyase. The protein is DNA polymerase beta (polb) of Xenopus laevis (African clawed frog).